Consider the following 507-residue polypeptide: MKNTYYITTPIYYVNDVSHIGHAYTSVASDVIARFMRCCGKDVMFLTGTDEHGQKVEKAAINKNIDPQSFTDKTSQNFRDLMVAMNISNDDFIRTTENRHKKAVAVFWQKLLDNGAIYEGFYEGWYSVRDEAFYDESEITEDKLAPTGAPVEWVKEPSYFFNLAKWQDKLLEFYELNPDFVRPISRRNEVISFVKSGLKDLSISRTTFNWGIKVPNNEKHVIYVWLDALVNYISALGYPDQQSNYSKFWPANLQVVGKDILRFHAVYWPAFLMAAEISPPKSIMVHGWWTNAGQKISKSLGNTIDPITLIDEFGVDQVRYFLMREVIFGADANFTRNNLITRINSELSNKIGNLLHRIVSFVYNNNDAKVPLIKSGVIDKIYELPILKTAMKFAQENILLMDKIEINKILENIINLAEDANIYIANEAPWNLKKTDYDKMLEVLYTLLEVLRYVAIMLQPFVPSSANKMLDQLGVAKEERLFKHLVRDHALKAGSNILEPSIIFPKI.

The 'HIGH' region signature appears at Y12–H22. The short motif at K295–S299 is the 'KMSKS' region element. K298 provides a ligand contact to ATP.

This sequence belongs to the class-I aminoacyl-tRNA synthetase family. MetG type 2B subfamily. As to quaternary structure, monomer.

The protein localises to the cytoplasm. It carries out the reaction tRNA(Met) + L-methionine + ATP = L-methionyl-tRNA(Met) + AMP + diphosphate. In terms of biological role, is required not only for elongation of protein synthesis but also for the initiation of all mRNA translation through initiator tRNA(fMet) aminoacylation. The polypeptide is Methionine--tRNA ligase (Rickettsia typhi (strain ATCC VR-144 / Wilmington)).